Reading from the N-terminus, the 674-residue chain is DNA ligase (674 aa).

Residues 31–35 (DYEYD), 80–81 (SL), and Glu110 contribute to the NAD(+) site. Catalysis depends on Lys112, which acts as the N6-AMP-lysine intermediate. The NAD(+) site is built by Arg133, Glu167, Lys283, and Lys307. Zn(2+)-binding residues include Cys401, Cys404, Cys419, and Cys424. Residues 584 to 673 (KVEKIFEGMK…SKDEVKAVLE (90 aa)) enclose the BRCT domain.

The protein belongs to the NAD-dependent DNA ligase family. LigA subfamily. Requires Mg(2+) as cofactor. The cofactor is Mn(2+).

The catalysed reaction is NAD(+) + (deoxyribonucleotide)n-3'-hydroxyl + 5'-phospho-(deoxyribonucleotide)m = (deoxyribonucleotide)n+m + AMP + beta-nicotinamide D-nucleotide.. DNA ligase that catalyzes the formation of phosphodiester linkages between 5'-phosphoryl and 3'-hydroxyl groups in double-stranded DNA using NAD as a coenzyme and as the energy source for the reaction. It is essential for DNA replication and repair of damaged DNA. This is DNA ligase from Clostridioides difficile (strain 630) (Peptoclostridium difficile).